Consider the following 218-residue polypeptide: PKHD-type hydroxylase IL0759 (218 aa).

The 95-residue stretch at 76 to 170 (QVARVTINRY…RLAMIGWVQS (95 aa)) folds into the Fe2OG dioxygenase domain. Positions 94, 96, and 151 each coordinate Fe cation. Arg-161 contacts 2-oxoglutarate.

Requires Fe(2+) as cofactor. L-ascorbate is required as a cofactor.

In Idiomarina loihiensis (strain ATCC BAA-735 / DSM 15497 / L2-TR), this protein is PKHD-type hydroxylase IL0759.